We begin with the raw amino-acid sequence, 405 residues long: Glucose-1-phosphate adenylyltransferase (405 aa).

Residues tyrosine 99, glycine 164, 179-180, and serine 197 each bind alpha-D-glucose 1-phosphate; that span reads EK.

The protein belongs to the bacterial/plant glucose-1-phosphate adenylyltransferase family. As to quaternary structure, homotetramer.

The catalysed reaction is alpha-D-glucose 1-phosphate + ATP + H(+) = ADP-alpha-D-glucose + diphosphate. It participates in glycan biosynthesis; glycogen biosynthesis. Its function is as follows. Involved in the biosynthesis of ADP-glucose, a building block required for the elongation reactions to produce glycogen. Catalyzes the reaction between ATP and alpha-D-glucose 1-phosphate (G1P) to produce pyrophosphate and ADP-Glc. This chain is Glucose-1-phosphate adenylyltransferase, found in Corynebacterium aurimucosum (strain ATCC 700975 / DSM 44827 / CIP 107346 / CN-1) (Corynebacterium nigricans).